The chain runs to 496 residues: Glycerol kinase (496 aa).

Position 12 (threonine 12) interacts with ADP. Positions 12, 13, and 14 each coordinate ATP. Threonine 12 is a binding site for sn-glycerol 3-phosphate. Arginine 16 serves as a coordination point for ADP. The sn-glycerol 3-phosphate site is built by arginine 82, glutamate 83, and tyrosine 134. Glycerol contacts are provided by arginine 82, glutamate 83, and tyrosine 134. Histidine 230 carries the post-translational modification Phosphohistidine; by HPr. Residue aspartate 244 participates in sn-glycerol 3-phosphate binding. 2 residues coordinate glycerol: aspartate 244 and glutamine 245. ADP-binding residues include threonine 266 and glycine 309. Positions 266, 309, 313, and 410 each coordinate ATP. ADP-binding residues include glycine 410 and asparagine 414.

The protein belongs to the FGGY kinase family. Homotetramer and homodimer (in equilibrium). The phosphoenolpyruvate-dependent sugar phosphotransferase system (PTS), including enzyme I, and histidine-containing protein (HPr) are required for the phosphorylation, which leads to the activation of the enzyme.

It catalyses the reaction glycerol + ATP = sn-glycerol 3-phosphate + ADP + H(+). It functions in the pathway polyol metabolism; glycerol degradation via glycerol kinase pathway; sn-glycerol 3-phosphate from glycerol: step 1/1. With respect to regulation, activated by phosphorylation and inhibited by fructose 1,6-bisphosphate (FBP). In terms of biological role, key enzyme in the regulation of glycerol uptake and metabolism. Catalyzes the phosphorylation of glycerol to yield sn-glycerol 3-phosphate. The protein is Glycerol kinase of Bacillus subtilis (strain 168).